Here is a 330-residue protein sequence, read N- to C-terminus: MSIIVTGAAGFIGSNLLQALNRRGETDIIAVDDLTDGEQFRNLADADIADYLDQNDFLERYARGDFGTVRALFHQGACASTLESNGRYMMENNYRYSCRLLESSLELGVPFLYASSAAVYGAGRTFREARQYERPLNVYGYSKFLFDQRVRRALPQARSQVVGLRYFNVYGPREEHKGRMASVAYHCYQQLRRDGRVELFGEHGGFPPGGHLRDFVAVEDVARVNLHFFDHPQRSGIFNLGSGQARTFNEVALAVINSVRANADQPPLSLQQAVESGLLGYREFPESLRARYQSHTCADLELLREAGYRDDFQSLEEGVAGYCRWLARSA.

NADP(+) contacts are provided by residues 11–12, 32–33, Gln-39, Gln-54, 75–79, and Asn-92; these read FI, DD, and QGACA. Tyr-139 functions as the Proton acceptor in the catalytic mechanism. Position 143 (Lys-143) interacts with NADP(+). Asn-168 is a binding site for substrate. Val-169 and Lys-177 together coordinate NADP(+). Lys-177 (proton acceptor) is an active-site residue. Substrate contacts are provided by residues Arg-179, His-186, 200–203, Arg-213, and Tyr-292; that span reads FGEH.

This sequence belongs to the NAD(P)-dependent epimerase/dehydratase family. HldD subfamily. Homopentamer. It depends on NADP(+) as a cofactor.

The catalysed reaction is ADP-D-glycero-beta-D-manno-heptose = ADP-L-glycero-beta-D-manno-heptose. The protein operates within nucleotide-sugar biosynthesis; ADP-L-glycero-beta-D-manno-heptose biosynthesis; ADP-L-glycero-beta-D-manno-heptose from D-glycero-beta-D-manno-heptose 7-phosphate: step 4/4. Its function is as follows. Catalyzes the interconversion between ADP-D-glycero-beta-D-manno-heptose and ADP-L-glycero-beta-D-manno-heptose via an epimerization at carbon 6 of the heptose. The protein is ADP-L-glycero-D-manno-heptose-6-epimerase of Pseudomonas aeruginosa (strain UCBPP-PA14).